The chain runs to 901 residues: HTH-type transcriptional regulator MalT (901 aa).

Position 39–46 (39–46 (SPAGYGKT)) interacts with ATP. Positions 829–894 (ELIRTSPLTQ…DAVQHAQQLL (66 aa)) constitute an HTH luxR-type domain. A DNA-binding region (H-T-H motif) is located at residues 853–872 (NEQIAGELDVAATTIKTHIR).

The protein belongs to the MalT family. As to quaternary structure, monomer in solution. Oligomerizes to an active state in the presence of the positive effectors ATP and maltotriose.

With respect to regulation, activated by ATP and maltotriose, which are both required for DNA binding. Positively regulates the transcription of the maltose regulon whose gene products are responsible for uptake and catabolism of malto-oligosaccharides. Specifically binds to the promoter region of its target genes, recognizing a short DNA motif called the MalT box. This chain is HTH-type transcriptional regulator MalT, found in Klebsiella pneumoniae (strain 342).